A 274-amino-acid polypeptide reads, in one-letter code: Large ribosomal subunit protein uL2 (274 aa).

Disordered stretches follow at residues 28-59 (APYA…GGHK) and 222-274 (GAAM…RRTK). The span at 39 to 49 (KSGGRNNNGRI) shows a compositional bias: polar residues. The segment covering 229–239 (DHPHGGGEGRS) has biased composition (basic and acidic residues).

Belongs to the universal ribosomal protein uL2 family. As to quaternary structure, part of the 50S ribosomal subunit. Forms a bridge to the 30S subunit in the 70S ribosome.

One of the primary rRNA binding proteins. Required for association of the 30S and 50S subunits to form the 70S ribosome, for tRNA binding and peptide bond formation. It has been suggested to have peptidyltransferase activity; this is somewhat controversial. Makes several contacts with the 16S rRNA in the 70S ribosome. This is Large ribosomal subunit protein uL2 from Marinomonas sp. (strain MWYL1).